A 189-amino-acid chain; its full sequence is GTP cyclohydrolase 1 (189 aa).

Zn(2+)-binding residues include Cys78, His81, and Cys150.

It belongs to the GTP cyclohydrolase I family. In terms of assembly, homomer.

It catalyses the reaction GTP + H2O = 7,8-dihydroneopterin 3'-triphosphate + formate + H(+). The protein operates within cofactor biosynthesis; 7,8-dihydroneopterin triphosphate biosynthesis; 7,8-dihydroneopterin triphosphate from GTP: step 1/1. This chain is GTP cyclohydrolase 1, found in Bacillus mycoides (strain KBAB4) (Bacillus weihenstephanensis).